Here is a 79-residue protein sequence, read N- to C-terminus: uncharacterized protein (79 aa).

The stretch at 4–43 (QENEDLRKQLVEASELLKSQAKELKDAHQQQKLALQDFLE) forms a coiled coil.

This is an uncharacterized protein from Homo sapiens (Human).